We begin with the raw amino-acid sequence, 310 residues long: Small ribosomal subunit protein uS2 (310 aa).

2 disordered regions span residues 213–240 and 271–310; these read EEQA…GGAA and WDSV…TDWA. Residues 216–227 are compositionally biased toward low complexity; the sequence is AALARQQEEANA. The span at 297–310 shows a compositional bias: polar residues; sequence VTMQEQAKPSTDWA.

Belongs to the universal ribosomal protein uS2 family. Component of the small ribosomal subunit. Mature ribosomes consist of a small (40S) and a large (60S) subunit. The 40S subunit contains about 33 different proteins and 1 molecule of RNA (18S). The 60S subunit contains about 49 different proteins and 3 molecules of RNA (28S, 5.8S and 5S). Interacts with ribosomal protein S21.

Its subcellular location is the cytoplasm. In terms of biological role, required for the assembly and/or stability of the 40S ribosomal subunit. Required for the processing of the 20S rRNA-precursor to mature 18S rRNA in a late step of the maturation of 40S ribosomal subunits. The polypeptide is Small ribosomal subunit protein uS2 (Nematostella vectensis (Starlet sea anemone)).